The primary structure comprises 160 residues: Protein-export protein SecB (160 aa).

It belongs to the SecB family. In terms of assembly, homotetramer, a dimer of dimers. One homotetramer interacts with 1 SecA dimer.

Its subcellular location is the cytoplasm. One of the proteins required for the normal export of preproteins out of the cell cytoplasm. It is a molecular chaperone that binds to a subset of precursor proteins, maintaining them in a translocation-competent state. It also specifically binds to its receptor SecA. This Rhizobium johnstonii (strain DSM 114642 / LMG 32736 / 3841) (Rhizobium leguminosarum bv. viciae) protein is Protein-export protein SecB.